The primary structure comprises 269 residues: Eukaryotic translation initiation factor 3 subunit G-2 (269 aa).

One can recognise an RRM domain in the interval serine 189–proline 267.

The protein belongs to the eIF-3 subunit G family. In terms of assembly, component of the eukaryotic translation initiation factor 3 (eIF-3) complex. The eIF-3 complex interacts with pix.

It localises to the cytoplasm. Functionally, RNA-binding component of the eukaryotic translation initiation factor 3 (eIF-3) complex, which is involved in protein synthesis of a specialized repertoire of mRNAs and, together with other initiation factors, stimulates binding of mRNA and methionyl-tRNAi to the 40S ribosome. The eIF-3 complex specifically targets and initiates translation of a subset of mRNAs involved in cell proliferation. This subunit can bind 18S rRNA. This Drosophila ananassae (Fruit fly) protein is Eukaryotic translation initiation factor 3 subunit G-2.